Reading from the N-terminus, the 1017-residue chain is Probable calcium-transporting ATPase 8, plasma membrane-type (1017 aa).

Residues 1-153 (MEKLDRYLQE…FVWDAFQDMT (153 aa)) lie on the Cytoplasmic side of the membrane. Transmembrane regions (helical) follow at residues 154-174 (LIIL…TEGW) and 177-197 (GMYD…VTAV). The Cytoplasmic portion of the chain corresponds to 198–228 (SDYKQSLQFKELDNEKKKIFIHVTRDGRRQK). The next 2 membrane-spanning stretches (helical) occupy residues 229-249 (ISIY…DQVP) and 331-351 (VATV…LVLL). Over 352–384 (VRFLIDKGMTVGLLKWYSTDALTIVNYFATAVT) the chain is Cytoplasmic. Residues 385–405 (IIVVAVPEGLPLAVTLSLAFA) form a helical membrane-spanning segment. Catalysis depends on Asp434, which acts as the 4-aspartylphosphate intermediate. Residues Asp736 and Asp740 each contribute to the Mg(2+) site. The helical transmembrane segment at 803–823 (IVALVINFVSACITGSAPLTA) threads the bilayer. The Cytoplasmic portion of the chain corresponds to 824–825 (VQ). 2 helical membrane passes run 826 to 846 (LLWV…TEPP) and 875 to 895 (SLYQ…LLNI). The Cytoplasmic portion of the chain corresponds to 896–938 (KGADSKSIINTLIFNSFVFCQVFNEINSREMQKINVFRGIISN). A run of 2 helical transmembrane segments spans residues 939 to 959 (WIFI…IEFL) and 973 to 993 (WLLS…LKCI). The Cytoplasmic segment spans residues 994–1017 (PVGSGETSATPNGYRPLANGPDDI).

It belongs to the cation transport ATPase (P-type) (TC 3.A.3) family. Type IIB subfamily.

It is found in the membrane. It catalyses the reaction Ca(2+)(in) + ATP + H2O = Ca(2+)(out) + ADP + phosphate + H(+). With respect to regulation, activated by calmodulin. This magnesium-dependent enzyme catalyzes the hydrolysis of ATP coupled with the translocation of calcium from the cytosol out of the cell, into the endoplasmic reticulum, or into organelles. The protein is Probable calcium-transporting ATPase 8, plasma membrane-type of Oryza sativa subsp. japonica (Rice).